The sequence spans 127 residues: Histidine-containing phosphotransfer protein 4 (127 aa).

The HPt domain occupies 27–122; it reads NPNFVEEVSA…STLRKKLEHY (96 aa). H68 carries the phosphohistidine modification.

In terms of assembly, interacts with the B-type response regulators ARR1 and ARR2. Post-translationally, two-component system major event consists of a His-to-Asp phosphorelay between a sensor histidine kinase (HK) and a response regulator (RR). In plants, the His-to-Asp phosphorelay involves an additional intermediate named Histidine-containing phosphotransfer protein (HPt). This multistep phosphorelay consists of a His-Asp-His-Asp sequential transfer of a phosphate group between first a His and an Asp of the HK protein, followed by the transfer to a conserved His of the HPt protein and finally the transfer to an Asp in the receiver domain of the RR protein. In terms of tissue distribution, predominantly expressed in aerial parts of the plant.

It is found in the cytoplasm. The protein localises to the cytosol. Its subcellular location is the nucleus. Its function is as follows. Functions as a two-component phosphorelay mediator between cytokinin sensor histidine kinases and response regulators (B-type ARRs). Plays an important role in propagating cytokinin signal transduction through the multistep His-to-Asp phosphorelay. This is Histidine-containing phosphotransfer protein 4 (AHP4) from Arabidopsis thaliana (Mouse-ear cress).